Here is a 500-residue protein sequence, read N- to C-terminus: NAD(P)H-quinone oxidoreductase chain 4, chloroplastic (500 aa).

Transmembrane regions (helical) follow at residues 4 to 24, 35 to 55, 87 to 107, 113 to 130, 134 to 154, 167 to 187, 207 to 227, 242 to 262, 272 to 292, 305 to 325, 330 to 350, 386 to 406, 416 to 436, and 462 to 482; these read FPWLTIIVVLPIFAGSLIFFL, YTICICMLELLLTTYAFCYHF, LGPVLLTGFITTLATLAAWPV, LFHFLMLAMYSGQIGSFS, LLLFFIMWELELIPVYLLLSM, FILYTAGGSIFLLMGVLGVGL, VALEIIFYIGFLIAFAVKLPI, HYSTCMLLAGILLKMGAYGLI, AHSIFSPWLMVVGTIQIIYAA, IAYSSVSHMGFILIGIASITD, GAILQIISHGFIGAALFFLAG, LALPGMSGFVAEVLVFLGIIT, IAITFVMAIGMILTPIYLLSM, and LFVSISIFIPVIGIGMYPDFV.

This sequence belongs to the complex I subunit 4 family.

Its subcellular location is the plastid. The protein resides in the chloroplast thylakoid membrane. The catalysed reaction is a plastoquinone + NADH + (n+1) H(+)(in) = a plastoquinol + NAD(+) + n H(+)(out). It carries out the reaction a plastoquinone + NADPH + (n+1) H(+)(in) = a plastoquinol + NADP(+) + n H(+)(out). This is NAD(P)H-quinone oxidoreductase chain 4, chloroplastic from Helianthus annuus (Common sunflower).